A 343-amino-acid polypeptide reads, in one-letter code: N-acetyl-gamma-glutamyl-phosphate reductase (343 aa).

C152 is a catalytic residue.

The protein belongs to the NAGSA dehydrogenase family. Type 1 subfamily.

The protein localises to the cytoplasm. The enzyme catalyses N-acetyl-L-glutamate 5-semialdehyde + phosphate + NADP(+) = N-acetyl-L-glutamyl 5-phosphate + NADPH + H(+). The protein operates within amino-acid biosynthesis; L-arginine biosynthesis; N(2)-acetyl-L-ornithine from L-glutamate: step 3/4. Functionally, catalyzes the NADPH-dependent reduction of N-acetyl-5-glutamyl phosphate to yield N-acetyl-L-glutamate 5-semialdehyde. This is N-acetyl-gamma-glutamyl-phosphate reductase from Methanopyrus kandleri (strain AV19 / DSM 6324 / JCM 9639 / NBRC 100938).